A 403-amino-acid chain; its full sequence is Ribosomal RNA large subunit methyltransferase I (403 aa).

In terms of domain architecture, PUA spans 9 to 88 (YPRLVLSKGR…ESIDIAFFTR (80 aa)).

Belongs to the methyltransferase superfamily. RlmI family.

It localises to the cytoplasm. The enzyme catalyses cytidine(1962) in 23S rRNA + S-adenosyl-L-methionine = 5-methylcytidine(1962) in 23S rRNA + S-adenosyl-L-homocysteine + H(+). In terms of biological role, specifically methylates the cytosine at position 1962 (m5C1962) of 23S rRNA. This is Ribosomal RNA large subunit methyltransferase I from Salmonella agona (strain SL483).